The primary structure comprises 508 residues: Erythropoietin receptor (508 aa).

A signal peptide spans 1–24 (MNHLWTHLWPGVGSLCLLLAGAAW). At 25–250 (ASLPKPLDPK…SLLTASDLDP (226 aa)) the chain is on the extracellular side. Cys52 and Cys62 form a disulfide bridge. Asn76 is a glycosylation site (N-linked (GlcNAc...) asparagine). A disulfide bridge links Cys91 with Cys107. The Fibronectin type-III domain occupies 148–247 (PPAGLLARRA…EPASLLTASD (100 aa)). Asn184 carries N-linked (GlcNAc...) asparagine glycosylation. The WSXWS motif motif lies at 233 to 237 (WSAWS). The helical transmembrane segment at 251 to 273 (LILTLSLILVLILLLLAVLALLS) threads the bilayer. The Cytoplasmic portion of the chain corresponds to 274 to 508 (HRRTLKQKIW…PSPPGYVACS (235 aa)). Lys281 participates in a covalent cross-link: Glycyl lysine isopeptide (Lys-Gly) (interchain with G-Cter in ubiquitin). A Box 1 motif motif is present at residues 282-290 (IWPGIPSPE). Phosphotyrosine; by JAK2 is present on residues Tyr368 and Tyr426. The ITIM motif signature appears at 452 to 457 (IKYLYL). Residue Lys453 forms a Glycyl lysine isopeptide (Lys-Gly) (interchain with G-Cter in ubiquitin) linkage. Phosphotyrosine; by JAK2 occurs at positions 454, 456, 468, 489, and 504. The tract at residues 467–508 (DYSSGGSQGAQGDSLNSPFLNPYENSLIPAPEPSPPGYVACS) is disordered.

Belongs to the type I cytokine receptor family. Type 1 subfamily. As to quaternary structure, forms homodimers on EPO stimulation. The tyrosine-phosphorylated form interacts with several SH2 domain-containing proteins including LYN, the adapter protein SH2B2, PTPN6, PTPN11, JAK2, PI3 kinases, STAT5A/B, SOCS3, CRKL. Interacts with INPP5D/SHIP1. SH2B2 binding inhibits the JAK-STAT signaling. Interacts with RHEX; this interaction occurs in a erythropoietin (EPO)-dependent manner. Interacts with ATXN2L. On EPO stimulation, phosphorylated on C-terminal tyrosine residues by JAK2. The phosphotyrosine motifs are also recruitment sites for several SH2-containing proteins and adapter proteins which mediate cell proliferation. Phosphorylation on Tyr-454 is required for PTPN6 interaction, Tyr-426 for PTPN11. Tyr-426 is also required for SOCS3 binding, but Tyr-454/Tyr-456 motif is the preferred binding site. Post-translationally, ubiquitinated by the ECS(SOCS2) complex following ligand-binding and phosphorylation by JAK2, leading to its degradation by the proteasome. Regulation by the ECS(SOCS2) complex acts as a negative feedback loop of erythropoietin-mediated signaling pathway. Ubiquitination at Lys-281 mediates receptor internalization, whereas ubiquitination at Lys-453 promotes trafficking of activated receptors to the lysosomes for degradation. Ubiquitinated by NOSIP; appears to be either multi-monoubiquitinated or polyubiquitinated. Ubiquitination mediates proliferation and survival of EPO-dependent cells.

Its subcellular location is the cell membrane. Receptor for erythropoietin, which mediates erythropoietin-induced erythroblast proliferation and differentiation. Upon EPO stimulation, EPOR dimerizes triggering the JAK2/STAT5 signaling cascade. In some cell types, can also activate STAT1 and STAT3. May also activate the LYN tyrosine kinase. Its function is as follows. Isoform EPOR-T acts as a dominant-negative receptor of EPOR-mediated signaling. The sequence is that of Erythropoietin receptor (EPOR) from Canis lupus familiaris (Dog).